A 75-amino-acid polypeptide reads, in one-letter code: Exodeoxyribonuclease 7 small subunit (75 aa).

The protein belongs to the XseB family. Heterooligomer composed of large and small subunits.

Its subcellular location is the cytoplasm. The enzyme catalyses Exonucleolytic cleavage in either 5'- to 3'- or 3'- to 5'-direction to yield nucleoside 5'-phosphates.. Its function is as follows. Bidirectionally degrades single-stranded DNA into large acid-insoluble oligonucleotides, which are then degraded further into small acid-soluble oligonucleotides. This chain is Exodeoxyribonuclease 7 small subunit, found in Chlamydia pneumoniae (Chlamydophila pneumoniae).